A 348-amino-acid polypeptide reads, in one-letter code: tRNA N6-adenosine threonylcarbamoyltransferase (348 aa).

Positions 111 and 115 each coordinate Fe cation. Substrate is bound by residues 134–138 (LISGG), aspartate 167, glycine 180, and asparagine 277. Residue aspartate 305 coordinates Fe cation.

The protein belongs to the KAE1 / TsaD family. The cofactor is Fe(2+).

The protein resides in the cytoplasm. It catalyses the reaction L-threonylcarbamoyladenylate + adenosine(37) in tRNA = N(6)-L-threonylcarbamoyladenosine(37) in tRNA + AMP + H(+). Functionally, required for the formation of a threonylcarbamoyl group on adenosine at position 37 (t(6)A37) in tRNAs that read codons beginning with adenine. Is involved in the transfer of the threonylcarbamoyl moiety of threonylcarbamoyl-AMP (TC-AMP) to the N6 group of A37, together with TsaE and TsaB. TsaD likely plays a direct catalytic role in this reaction. The protein is tRNA N6-adenosine threonylcarbamoyltransferase of Haemophilus ducreyi (strain 35000HP / ATCC 700724).